The chain runs to 96 residues: MSDTLLDLDFETTAQNPNSNEILPLGTEALIIYNSPSGEKRSTKNQTKENTKNDTGSLFDDLGIKDHTANQQTNENSKPLSDSEILKKFSSPPHPK.

A disordered region spans residues Ser-35 to Lys-96. Residues Gly-38 to Lys-52 show a composition bias toward basic and acidic residues. Positions Ala-69–Leu-80 are enriched in polar residues.

This is an uncharacterized protein from Dictyostelium discoideum (Social amoeba).